A 205-amino-acid chain; its full sequence is Polyamine-modulated factor 1 (205 aa).

The segment at 1 to 28 is disordered; it reads MAEASSVNVGSGCAEKGPEELSQEPARP. The stretch at 140–190 forms a coiled coil; the sequence is YLLQQRDALQRRVQRQEAENRQLADAVLAGRRQLEELQLQAQARQQAWQAL.

In terms of assembly, component of the MIS12 complex composed of MIS12, DSN1, NSL1 and PMF1. Interacts with COPS7A. Interacts via its coiled-coil domain with the leucine-zipper domain of NFE2L2. The interaction with NFE2L2 is required for the transcriptional regulation of SSAT.

It localises to the nucleus. It is found in the chromosome. Its subcellular location is the centromere. The protein resides in the kinetochore. Part of the MIS12 complex which is required for normal chromosome alignment and segregation and kinetochore formation during mitosis. May act as a cotranscription partner of NFE2L2 involved in regulation of polyamine-induced transcription of SSAT. The chain is Polyamine-modulated factor 1 (PMF1) from Bos taurus (Bovine).